Here is a 358-residue protein sequence, read N- to C-terminus: Trace amine-associated receptor 7f (358 aa).

Topologically, residues 1–47 are extracellular; the sequence is MSIADETVSWNQDSILSRDLFSATSAELCYENLNRSCVRSPYSPGPR. N-linked (GlcNAc...) asparagine glycosylation is present at Asn-34. 2 disulfides stabilise this stretch: Cys-37–Cys-201 and Cys-120–Cys-205. The chain crosses the membrane as a helical span at residues 48-68; the sequence is LILYAVFGFGAVLAVCGNLLV. Topologically, residues 69 to 83 are cytoplasmic; it reads MTSILHFRQLHSPAN. A helical membrane pass occupies residues 84 to 104; that stretch reads FLVASLACADFLVGVMVMPFS. At 105 to 121 the chain is on the extracellular side; the sequence is MVRSVEGCWYFGDSYCK. Residues 122–143 traverse the membrane as a helical segment; the sequence is LHTCFDVSFCYCSLFHLCFISV. Residues 144-166 are Cytoplasmic-facing; it reads DRYIAVSDPLAYPTRFTASVSGK. The chain crosses the membrane as a helical span at residues 167 to 187; it reads CITFSWLLSISYGFSLIYTGA. Residues 188–212 are Extracellular-facing; the sequence is SEAGLEDLVSSLTCVGGCQIAVNQT. N-linked (GlcNAc...) asparagine glycosylation is present at Asn-210. Residues 213 to 233 form a helical membrane-spanning segment; sequence WVFINFSVFLIPTLVMITVYS. Residues 234–274 lie on the Cytoplasmic side of the membrane; that stretch reads KIFLIAKQQAQNIEKMSKQTARASDSYKDRVAKRERKAAKT. Residues 275–295 form a helical membrane-spanning segment; sequence LGIAVAAFLLSWLPYFIDSFI. Over 296–309 the chain is Extracellular; it reads DAFLGFITPTYVYE. Residues 310-333 form a helical membrane-spanning segment; it reads ILVWIVYYNSAMNPLIYAFFYPWF. Over 334-358 the chain is Cytoplasmic; the sequence is RKAIKLTVTGKILRENSSTTNLFSE.

It belongs to the G-protein coupled receptor 1 family. In terms of tissue distribution, specifically expressed in neurons of the olfactory epithelium.

The protein resides in the cell membrane. Its function is as follows. Olfactory receptor activated by trace amines, such as N-methylpiperidine and N,N-dimethylcyclohexylamine. Trace amine compounds are enriched in animal body fluids and act on trace amine-associated receptors (TAARs) to elicit both intraspecific and interspecific innate behaviors. Ligand-binding causes a conformation change that triggers signaling via G(s)-class of G alpha proteins (GNAL or GNAS). In Mus musculus (Mouse), this protein is Trace amine-associated receptor 7f.